The chain runs to 320 residues: Glycerol-3-phosphate dehydrogenase [NAD(P)+] (320 aa).

NADPH-binding residues include Phe-11, Arg-30, and Lys-102. Sn-glycerol 3-phosphate contacts are provided by Lys-102, Gly-130, and Ser-132. Ala-134 contacts NADPH. Sn-glycerol 3-phosphate is bound by residues Lys-185, Asp-238, Ser-248, Arg-249, and Asn-250. The active-site Proton acceptor is the Lys-185. Position 249 (Arg-249) interacts with NADPH. NADPH is bound at residue Glu-270.

This sequence belongs to the NAD-dependent glycerol-3-phosphate dehydrogenase family.

The protein resides in the cytoplasm. The enzyme catalyses sn-glycerol 3-phosphate + NAD(+) = dihydroxyacetone phosphate + NADH + H(+). It carries out the reaction sn-glycerol 3-phosphate + NADP(+) = dihydroxyacetone phosphate + NADPH + H(+). Its pathway is membrane lipid metabolism; glycerophospholipid metabolism. Functionally, catalyzes the reduction of the glycolytic intermediate dihydroxyacetone phosphate (DHAP) to sn-glycerol 3-phosphate (G3P), the key precursor for phospholipid synthesis. The sequence is that of Glycerol-3-phosphate dehydrogenase [NAD(P)+] from Ruegeria sp. (strain TM1040) (Silicibacter sp.).